We begin with the raw amino-acid sequence, 104 residues long: Large ribosomal subunit protein bL21 (104 aa).

The protein belongs to the bacterial ribosomal protein bL21 family. In terms of assembly, part of the 50S ribosomal subunit. Contacts protein L20.

In terms of biological role, this protein binds to 23S rRNA in the presence of protein L20. The polypeptide is Large ribosomal subunit protein bL21 (Allorhizobium ampelinum (strain ATCC BAA-846 / DSM 112012 / S4) (Agrobacterium vitis (strain S4))).